Consider the following 652-residue polypeptide: Cleavage and polyadenylation specificity factor subunit 6 (652 aa).

Positions 20-85 (QAQDEFGGDG…GVYHQSSGSL (66 aa)) are disordered. The 81-residue stretch at 93–173 (YQLYVGNLTW…QAPVVTYPSK (81 aa)) folds into the RRM domain. Disordered regions lie at residues 184–440 (KTRP…QQMG) and 518–652 (SYNR…RSRH). Residues 187–203 (PVPPPQQNGPPRGPAPP) show a composition bias toward pro residues. A compositionally biased stretch (gly residues) spans 205-223 (MGGGPMPTGHPGGPQGGGP). Composition is skewed to pro residues over residues 256-266 (SGPPRMQPPMH), 295-307 (GPRP…PPQR), and 338-352 (PQGP…PGPG). The segment covering 391 to 406 (PGMNMPPQQGMNMTPQ) has biased composition (low complexity). A compositionally biased stretch (pro residues) spans 420 to 435 (GPWPPPQGKPPGPFPD). A compositionally biased stretch (basic and acidic residues) spans 518-528 (SYNRRERSRSR). Residues 529–538 (ERSHRSRQRR) are compositionally biased toward basic residues. A compositionally biased stretch (basic and acidic residues) spans 539 to 590 (ERSTSRYRERSRERERDRDRERERDGGSYRERSRSRERERQAPDHYRDDSRS). Ser-596 is subject to Phosphoserine. The span at 598 to 610 (EPVVAEAAEAPSS) shows a compositional bias: low complexity. Over residues 612-652 (RYYEDRERYRSSDRERRDRDRDRDRERERDRDRREEHRSRH) the composition is skewed to basic and acidic residues.

Belongs to the RRM CPSF6/7 family.

The protein resides in the nucleus. Its function is as follows. May play a role in pre-mRNA 3'-processing. The chain is Cleavage and polyadenylation specificity factor subunit 6 from Drosophila melanogaster (Fruit fly).